Here is a 627-residue protein sequence, read N- to C-terminus: (-)-alpha-pinene synthase 2, chloroplastic (627 aa).

The N-terminal 36 residues, 1–36, are a transit peptide targeting the chloroplast; that stretch reads MALVSVAPMASRSCLHKSLSSSAHELKTICRTIPTL. Residues Asp-378, Asp-382, and Asp-530 each contribute to the Mg(2+) site. The DDXXD motif motif lies at 378–382; the sequence is DDMYD.

It belongs to the terpene synthase family. Tpsd subfamily. It depends on Mg(2+) as a cofactor. Mn(2+) serves as cofactor.

Its subcellular location is the plastid. It localises to the chloroplast. The catalysed reaction is (2E)-geranyl diphosphate = (1S,5S)-alpha-pinene + diphosphate. It carries out the reaction (2E)-geranyl diphosphate = (1S,5S)-beta-pinene + diphosphate. Its pathway is terpene metabolism; oleoresin biosynthesis. Functionally, involved in defensive oleoresin formation in conifers in response to insect attack or other injury. Involved in monoterpene (C10) olefins biosynthesis. A mixture of alpha- and beta-pinene (35:10) is produced by this enzyme. This Picea sitchensis (Sitka spruce) protein is (-)-alpha-pinene synthase 2, chloroplastic.